Reading from the N-terminus, the 495-residue chain is ATP synthase subunit beta (495 aa).

178-185 contributes to the ATP binding site; the sequence is GGAGVGKT.

This sequence belongs to the ATPase alpha/beta chains family. In terms of assembly, F-type ATPases have 2 components, CF(1) - the catalytic core - and CF(0) - the membrane proton channel. CF(1) has five subunits: alpha(3), beta(3), gamma(1), delta(1), epsilon(1). CF(0) has three main subunits: a(1), b(2) and c(9-12). The alpha and beta chains form an alternating ring which encloses part of the gamma chain. CF(1) is attached to CF(0) by a central stalk formed by the gamma and epsilon chains, while a peripheral stalk is formed by the delta and b chains.

It localises to the cell membrane. It carries out the reaction ATP + H2O + 4 H(+)(in) = ADP + phosphate + 5 H(+)(out). Functionally, produces ATP from ADP in the presence of a proton gradient across the membrane. The catalytic sites are hosted primarily by the beta subunits. The protein is ATP synthase subunit beta of Bifidobacterium animalis subsp. lactis (strain AD011).